The primary structure comprises 682 residues: Kinesin-like protein KIF2A (682 aa).

Positions 1 to 192 (MVTSLNEDSE…LDYRPLTTSD (192 aa)) are globular. The interval 39-129 (LAPDEEIDPG…GKKDFGLASR (91 aa)) is disordered. A compositionally biased stretch (polar residues) spans 99 to 115 (IEQSASRQQNGSVSDIS). Residues 198–528 (RICVCVRKRP…LRYANRVKEL (331 aa)) enclose the Kinesin motor domain. ATP is bound at residue 288-295 (GQTGSGKT). A coiled-coil region spans residues 638–673 (QLEAILEKKIDILTELRDKVKSFRAALQEEEHASKQ).

This sequence belongs to the TRAFAC class myosin-kinesin ATPase superfamily. Kinesin family. MCAK/KIF2 subfamily. In terms of assembly, interacts with aurka and plk1. Phosphorylation by plk1 promotes location at spindle microtubules and spindle poles, and enhances its microtubule depolymerization activity. In terms of processing, phosphorylation by AURKA interferes with location at spindle microtubules and spindle poles, and inhibits its microtubule depolymerization activity.

The protein resides in the cytoplasm. Its subcellular location is the cytoskeleton. It localises to the microtubule organizing center. It is found in the centrosome. The protein localises to the spindle pole. The protein resides in the spindle. In terms of biological role, plus end-directed microtubule-dependent motor. May regulate microtubule dynamics during axonal growth. Required for normal progression through mitosis. Required for normal congress of chromosomes at the metaphase plate. Required for normal spindle dynamics during mitosis. Promotes spindle turnover. Implicated in formation of bipolar mitotic spindles Has microtubule depolymerization activity. In Xenopus laevis (African clawed frog), this protein is Kinesin-like protein KIF2A (kif2a).